The chain runs to 87 residues: Neutrophil antibiotic peptide NP-3A (87 aa).

An N-terminal signal peptide occupies residues 1 to 19 (MRTLTLLTTLLLLALHTQA). A propeptide spanning residues 20–58 (ESPQGSTKEAPDEEQDISVFFGGDKGTALQDAAVKAGVT) is cleaved from the precursor. 3 disulfide bridges follow: Cys59-Cys87, Cys61-Cys76, and Cys66-Cys86.

It belongs to the alpha-defensin family. As to expression, highest expression in bone marrow and to a much lesser extent in small intestine.

Its subcellular location is the secreted. Its function is as follows. Active in vitro against S.aureus, fungi, Gram-positive and Gram-negative bacteria and to a lesser extent against an enveloped virus. This chain is Neutrophil antibiotic peptide NP-3A, found in Rattus norvegicus (Rat).